A 294-amino-acid chain; its full sequence is 4-hydroxy-tetrahydrodipicolinate synthase (294 aa).

Thr-45 is a pyruvate binding site. The Proton donor/acceptor role is filled by Tyr-133. Lys-161 serves as the catalytic Schiff-base intermediate with substrate. Pyruvate is bound at residue Ile-203.

It belongs to the DapA family. In terms of assembly, homotetramer; dimer of dimers.

It localises to the cytoplasm. It carries out the reaction L-aspartate 4-semialdehyde + pyruvate = (2S,4S)-4-hydroxy-2,3,4,5-tetrahydrodipicolinate + H2O + H(+). It functions in the pathway amino-acid biosynthesis; L-lysine biosynthesis via DAP pathway; (S)-tetrahydrodipicolinate from L-aspartate: step 3/4. Catalyzes the condensation of (S)-aspartate-beta-semialdehyde [(S)-ASA] and pyruvate to 4-hydroxy-tetrahydrodipicolinate (HTPA). In Shewanella sp. (strain W3-18-1), this protein is 4-hydroxy-tetrahydrodipicolinate synthase.